We begin with the raw amino-acid sequence, 363 residues long: Replication factor C subunit 4 (363 aa).

Met-1 is subject to N-acetylmethionine. Residues 1–36 (MQAFLKGTSISTKPPLTKDRGVAASAGSSGENKKAK) form a disordered region. An N6-acetyllysine mark is found at Lys-6 and Lys-13. An ATP-binding site is contributed by 78 to 85 (GPPGTGKT).

It belongs to the activator 1 small subunits family. As to quaternary structure, subunit of the RFC complex, an heteropentameric complex consisting of a large subunit RFC1 and four small subunits RFC2, RFC3, RFC4 and RFC5; the RFC complex interacts with PCNA. Forms an heterotetrameric complex with RFC2, RFC3 and RFC5; this complex has ATPase activity but is not stimulated by PCNA. The heterotetramer of subunits RFC2, RFC3, RFC4 and RFC5 interacts with RAD17. Interacts with ATAD5. Interacts with CTF18. Interacts with CNTD1; this interaction facilitates crossover formation.

It localises to the nucleus. Functionally, subunit of the replication factor C (RFC) complex which acts during elongation of primed DNA templates by DNA polymerases delta and epsilon, and is necessary for ATP-dependent loading of proliferating cell nuclear antigen (PCNA) onto primed DNA. The RFC4 subunit probably functions as a scaffold on which the other complex components can assemble. This is Replication factor C subunit 4 (RFC4) from Homo sapiens (Human).